The sequence spans 114 residues: Chaperonin GroEL (114 aa).

Residue 22–26 (DGTTT) coordinates ATP.

This sequence belongs to the chaperonin (HSP60) family. In terms of assembly, forms a cylinder of 14 subunits composed of two heptameric rings stacked back-to-back. Interacts with the co-chaperonin GroES.

The protein resides in the cytoplasm. The catalysed reaction is ATP + H2O + a folded polypeptide = ADP + phosphate + an unfolded polypeptide.. In terms of biological role, together with its co-chaperonin GroES, plays an essential role in assisting protein folding. The GroEL-GroES system forms a nano-cage that allows encapsulation of the non-native substrate proteins and provides a physical environment optimized to promote and accelerate protein folding. This Mycobacterium ulcerans protein is Chaperonin GroEL.